A 123-amino-acid polypeptide reads, in one-letter code: Large ribosomal subunit protein bL12 (123 aa).

Belongs to the bacterial ribosomal protein bL12 family. Homodimer. Part of the ribosomal stalk of the 50S ribosomal subunit. Forms a multimeric L10(L12)X complex, where L10 forms an elongated spine to which 2 to 4 L12 dimers bind in a sequential fashion. Binds GTP-bound translation factors.

Forms part of the ribosomal stalk which helps the ribosome interact with GTP-bound translation factors. Is thus essential for accurate translation. This chain is Large ribosomal subunit protein bL12, found in Pseudoalteromonas atlantica (strain T6c / ATCC BAA-1087).